A 479-amino-acid chain; its full sequence is Oxysterol-binding protein homolog C23B6.01c (479 aa).

A phosphoserine mark is found at Ser328, Ser408, Ser409, and Ser421. Positions 404 to 418 (KPEDSSIHKHSRDAS) are enriched in basic and acidic residues. The disordered stretch occupies residues 404-479 (KPEDSSIHKH…KLHEEQDPAL (76 aa)). Residues 439–452 (QSTASFVTYRSDNG) show a composition bias toward polar residues. The segment covering 470–479 (KLHEEQDPAL) has biased composition (basic and acidic residues).

It belongs to the OSBP family.

The protein resides in the cytoplasm. It is found in the nucleus. This is Oxysterol-binding protein homolog C23B6.01c from Schizosaccharomyces pombe (strain 972 / ATCC 24843) (Fission yeast).